Consider the following 352-residue polypeptide: Septin-2B (352 aa).

In terms of domain architecture, Septin-type G spans 33–305 (KGFEFTLMVV…ENFRSERLKK (273 aa)). Positions 43–50 (GESGLGKS) are G1 motif. GTP is bound by residues 43–50 (GESGLGKS), T77, G103, 182–190 (KADTLTLRE), G240, and R255. The interval 100-103 (DTPG) is G3 motif. Positions 181-184 (AKAD) are G4 motif. The interval 259-269 (WGVVEVENPEH) is important for dimerization.

It belongs to the TRAFAC class TrmE-Era-EngA-EngB-Septin-like GTPase superfamily. Septin GTPase family. In terms of assembly, septins polymerize into heterooligomeric protein complexes that form filaments, and associate with cellular membranes, actin filaments and microtubules. GTPase activity is required for filament formation. Can form heterooligomers with other family members and form filaments. Interacts with wdpcp.

It localises to the cytoplasm. Its subcellular location is the cytoskeleton. It is found in the spindle. The protein localises to the cleavage furrow. The protein resides in the midbody. It localises to the cell projection. Its subcellular location is the cilium membrane. In terms of biological role, filament-forming cytoskeletal GTPase. Required for normal organization of the actin cytoskeleton. Plays a role in the biogenesis of polarized columnar-shaped epithelium. Required for the progression through mitosis through regulation of chromosome congression. During anaphase, may be required for chromosome segregation and spindle elongation. Probably plays a role in ciliogenesis and collective cell movements including convergent extension during gastrulation. In cilia, required for the integrity of the diffusion barrier at the base of the primary cilium that prevents diffusion of transmembrane proteins between the cilia and plasma membranes. Controls cell shape and not polarization of cells during convergent extension. The chain is Septin-2B (sept2-b) from Xenopus laevis (African clawed frog).